Here is a 301-residue protein sequence, read N- to C-terminus: MEDLYSIHPGISRVGGAASEASGVGVVVGGGGGSSSSDLTELMKAQIAGHPRYPTLLSAYIECRKVGAPPEVASLLKEIGRERRAGGGGGGAGQIGVDPELDEFMEAYCRVLVRYKEELSRPFDEAASFLSSIQTQLSNLCSGATSPPATTATHSDEMVGSSDEDQCSGETDMLDIGQEQSSRLADHELKEMLLKKYSGCLSRLRSEFLKKRKKGKLPKDARSALLEWWNTHYRWPYPTEEDKLRLAARTGLDPKQINNWFINQRKRHWKPSDGMRFALMEGVAGGSSGTTLYFDTGTIGP.

The segment at 141–170 (CSGATSPPATTATHSDEMVGSSDEDQCSGE) is disordered. Positions 144 to 153 (ATSPPATTAT) are enriched in low complexity. One can recognise an ELK domain in the interval 188–208 (ELKEMLLKKYSGCLSRLRSEF). Positions 209–272 (LKKRKKGKLP…NQRKRHWKPS (64 aa)) form a DNA-binding region, homeobox; TALE-type.

The protein belongs to the TALE/KNOX homeobox family.

The protein localises to the nucleus. Probable transcription factor that may be involved in shoot formation during early embryogenesis. This is Homeobox protein knotted-1-like 1 (OSH6) from Oryza sativa subsp. japonica (Rice).